The primary structure comprises 356 residues: Aromatic dipeptide epimerase (356 aa).

Substrate-binding positions include T136 and 161-163 (KVK). Mg(2+)-binding residues include D191, E219, and D244. Substrate is bound by residues K268 and 320 to 322 (DLD).

Belongs to the mandelate racemase/muconate lactonizing enzyme family. Mg(2+) serves as cofactor.

Its function is as follows. Has epimerase activity with a variety of hydrophobic dipeptides (in vitro). Enzyme activity is highest with L-Phe-L-Tyr, but is still relatively low, suggesting that L-Phe-L-Tyr is not the physiological substrate. This Herpetosiphon aurantiacus (strain ATCC 23779 / DSM 785 / 114-95) protein is Aromatic dipeptide epimerase.